We begin with the raw amino-acid sequence, 288 residues long: Probable syndecan (288 aa).

An N-terminal signal peptide occupies residues 1-26 (MILKLNFCLSTYSVLILLSLSTQAFA). At 27 to 231 (ANQAKTKVVP…ETLANGFYAA (205 aa)) the chain is on the extracellular side. The tract at residues 67–175 (EVNGSGYPTD…NIHNDEDFFT (109 aa)) is disordered. An N-linked (GlcNAc...) asparagine glycan is attached at N69. Residues S71 and S86 are each glycosylated (O-linked (Xyl...) (glycosaminoglycan) serine). A compositionally biased stretch (polar residues) spans 89-104 (PPSSATTKSDKVTSPS). Positions 106-124 (AVVTAKPTTVPTTTASFKP) are enriched in low complexity. Residues 141–164 (VEEDEDDDEDEDEDDEDDEEDFAD) are compositionally biased toward acidic residues. An O-linked (Xyl...) (glycosaminoglycan) serine glycan is attached at S214. The chain crosses the membrane as a helical span at residues 232–252 (IAGGVLVAVITAILLVLFVVF). The Cytoplasmic portion of the chain corresponds to 253 to 288 (RIRKKDEGSYALDEPKQARPYASYGYTKASTKEFYA).

It belongs to the syndecan proteoglycan family.

The protein resides in the membrane. Its subcellular location is the cell surface. It is found in the cell junction. It localises to the cytoplasm. Cell surface proteoglycan that bears heparan sulfate. Required for correct mitotic spindle orientation of the ABar blastomere division plane and this may be through modulation of astral microtubule array, and in association with the wnt-signaling proteins mig-5 and dsh-2. Involved in the migration of AQR and PQR neurons, which descend from the Q neuroblasts. Promotes the axon guidance of D-type motor neurons. The chain is Probable syndecan from Caenorhabditis elegans.